Here is an 84-residue protein sequence, read N- to C-terminus: Putative protein BCE-1 (84 aa).

This chain is Putative protein BCE-1 (BCE1), found in Homo sapiens (Human).